The following is a 255-amino-acid chain: 4-diphosphocytidyl-2-C-methyl-D-erythritol kinase (255 aa).

Lysine 6 is an active-site residue. Position 95-105 (95-105) interacts with ATP; the sequence is PVCAGLGGGSS. Residue aspartate 137 is part of the active site.

The protein belongs to the GHMP kinase family. IspE subfamily.

It catalyses the reaction 4-CDP-2-C-methyl-D-erythritol + ATP = 4-CDP-2-C-methyl-D-erythritol 2-phosphate + ADP + H(+). Its pathway is isoprenoid biosynthesis; isopentenyl diphosphate biosynthesis via DXP pathway; isopentenyl diphosphate from 1-deoxy-D-xylulose 5-phosphate: step 3/6. Functionally, catalyzes the phosphorylation of the position 2 hydroxy group of 4-diphosphocytidyl-2C-methyl-D-erythritol. The sequence is that of 4-diphosphocytidyl-2-C-methyl-D-erythritol kinase from Campylobacter jejuni subsp. jejuni serotype O:2 (strain ATCC 700819 / NCTC 11168).